We begin with the raw amino-acid sequence, 1015 residues long: Formate dehydrogenase, nitrate-inducible, major subunit (1015 aa).

Residues 1 to 33 (MDVSRRQFFKICAGGMAGTTVAALGFAPKQALA) constitute a signal peptide (tat-type signal). Positions 43–106 (AKEIRNTCTY…GLLDYVNSEN (64 aa)) constitute a 4Fe-4S Mo/W bis-MGD-type domain. [4Fe-4S] cluster contacts are provided by Cys50, Cys53, Cys57, and Cys92. Sec196 lines the Mo-bis(molybdopterin guanine dinucleotide) pocket. Position 196 (Sec196) is a non-standard amino acid, selenocysteine.

Belongs to the prokaryotic molybdopterin-containing oxidoreductase family. As to quaternary structure, trimer of heterotrimers, consisting of subunits alpha, beta and gamma. The cofactor is Mo-bis(molybdopterin guanine dinucleotide). It depends on [4Fe-4S] cluster as a cofactor. In terms of processing, exported by the Tat system. The position of the signal peptide cleavage has not been experimentally proven.

It localises to the periplasm. The enzyme catalyses a quinone + formate + H(+) = a quinol + CO2. In terms of biological role, formate dehydrogenase allows E.coli to use formate as major electron donor during anaerobic respiration, when nitrate is used as electron acceptor. The alpha subunit FdnG contains the formate oxidation site. Electrons are transferred from formate to menaquinone in the gamma subunit (FdnI), through the 4Fe-4S clusters in the beta subunit (FdnH). Formate dehydrogenase-N is part of a system that generates proton motive force, together with the dissimilatory nitrate reductase (Nar). The chain is Formate dehydrogenase, nitrate-inducible, major subunit (fdnG) from Escherichia coli (strain K12).